Consider the following 396-residue polypeptide: Ribosomal RNA large subunit methyltransferase I (396 aa).

In terms of domain architecture, PUA spans 2–79 (SVRLVLAKGR…QAESIDIAFF (78 aa)).

It belongs to the methyltransferase superfamily. RlmI family.

It is found in the cytoplasm. It catalyses the reaction cytidine(1962) in 23S rRNA + S-adenosyl-L-methionine = 5-methylcytidine(1962) in 23S rRNA + S-adenosyl-L-homocysteine + H(+). Functionally, specifically methylates the cytosine at position 1962 (m5C1962) of 23S rRNA. This Citrobacter koseri (strain ATCC BAA-895 / CDC 4225-83 / SGSC4696) protein is Ribosomal RNA large subunit methyltransferase I.